Reading from the N-terminus, the 322-residue chain is Protein mono-ADP-ribosyltransferase PARP16 (322 aa).

Over 1-287 (MQPSGWAAAR…RASSQLSWFS (287 aa)) the chain is Cytoplasmic. The 87-residue stretch at 5-91 (GWAAAREAAG…AWDLVSWILS (87 aa)) folds into the PARP alpha-helical domain. Aspartate 37 carries the post-translational modification ADP-ribosyl aspartic acid. Glutamate 70 carries the post-translational modification ADP-ribosyl glutamic acid. A PARP catalytic domain is found at 94–279 (VLTIHSAGKA…VYSQKPPKRA (186 aa)). N6-(ADP-ribosyl)lysine occurs at positions 110 and 137. Residues histidine 152, tyrosine 182, and tyrosine 254 each coordinate NAD(+). Residues 288 to 308 (SHWFTVMISLYLLLLLIVSVI) form a helical membrane-spanning segment. The Lumenal segment spans residues 309 to 322 (NSSAFQHFWNRAKR).

Belongs to the ARTD/PARP family. As to quaternary structure, interacts with KPNB1. Post-translationally, auto-mono-ADP-ribosylated.

The protein resides in the endoplasmic reticulum membrane. It catalyses the reaction L-aspartyl-[protein] + NAD(+) = 4-O-(ADP-D-ribosyl)-L-aspartyl-[protein] + nicotinamide. The catalysed reaction is L-glutamyl-[protein] + NAD(+) = 5-O-(ADP-D-ribosyl)-L-glutamyl-[protein] + nicotinamide. It carries out the reaction L-lysyl-[protein] + NAD(+) = N(6)-(ADP-D-ribosyl)-L-lysyl-[protein] + nicotinamide + H(+). Its activity is regulated as follows. In absence of activation signal, PARP16 is autoinhibited by the PARP alpha-helical domain (also named HD region), which prevents effective NAD(+)-binding. Activity is highly stimulated by signals, which unfold the PARP alpha-helical domain, relieving autoinhibition. Functionally, intracellular mono-ADP-ribosyltransferase that plays a role in different processes, such as protein translation and unfolded protein response (UPR), through the mono-ADP-ribosylation of proteins involved in those processes. Acts as an inhibitor of protein translation by catalyzing mono-ADP-ribosylation of ribosomal subunits, such as RPL14 and RPS6, thereby inhibiting polysome assembly and mRNA loading. Mono-ADP-ribosylation of ribosomal subunits is promoted by NMNAT2. Involved in the unfolded protein response (UPR) by ADP-ribosylating and activating EIF2AK3 and ERN1, two important UPR effectors. May also mediate mono-ADP-ribosylation of karyopherin KPNB1 a nuclear import factor. May not modify proteins on arginine or cysteine residues compared to other mono-ADP-ribosyltransferases. This Homo sapiens (Human) protein is Protein mono-ADP-ribosyltransferase PARP16.